Reading from the N-terminus, the 959-residue chain is Translation initiation factor IF-2 (959 aa).

Residues 1 to 10 are compositionally biased toward basic and acidic residues; that stretch reads MSDKTNDDKT. The tract at residues 1 to 374 is disordered; sequence MSDKTNDDKT…SQMQETREKI (374 aa). Residues 27–37 are compositionally biased toward polar residues; it reads EQSTVRQNFSH. Low complexity-rich tracts occupy residues 63–118 and 128–138; these read AAAA…VTKP and QRPGGQQAQRP. Composition is skewed to basic and acidic residues over residues 154 to 225 and 232 to 241; these read SEMD…EAAK and ARSERRDDAR. Low complexity predominate over residues 246–284; sequence GARPQQAGRPQGGRPQPAGRPQQGSPRPAPIIADAAPIA. The segment covering 318 to 333 has biased composition (basic and acidic residues); the sequence is PEVRAPKVVKGEDDRR. The region spanning 457-626 is the tr-type G domain; that stretch reads SRPPVVTIMG…LLQAEMLDLK (170 aa). The segment at 466–473 is G1; that stretch reads GHVDHGKT. 466–473 serves as a coordination point for GTP; that stretch reads GHVDHGKT. The interval 491-495 is G2; the sequence is GITQH. Positions 512–515 are G3; that stretch reads DTPG. GTP-binding positions include 512 to 516 and 566 to 569; these read DTPGH and NKID. The G4 stretch occupies residues 566–569; sequence NKID. The tract at residues 602–604 is G5; sequence SAK.

It belongs to the TRAFAC class translation factor GTPase superfamily. Classic translation factor GTPase family. IF-2 subfamily.

The protein resides in the cytoplasm. Functionally, one of the essential components for the initiation of protein synthesis. Protects formylmethionyl-tRNA from spontaneous hydrolysis and promotes its binding to the 30S ribosomal subunits. Also involved in the hydrolysis of GTP during the formation of the 70S ribosomal complex. This Brucella abortus (strain 2308) protein is Translation initiation factor IF-2.